We begin with the raw amino-acid sequence, 69 residues long: DNA gyrase inhibitor YacG (69 aa).

Zn(2+) is bound by residues Cys-7, Cys-10, Cys-26, and Cys-30.

Belongs to the DNA gyrase inhibitor YacG family. In terms of assembly, interacts with GyrB. Requires Zn(2+) as cofactor.

Functionally, inhibits all the catalytic activities of DNA gyrase by preventing its interaction with DNA. Acts by binding directly to the C-terminal domain of GyrB, which probably disrupts DNA binding by the gyrase. The chain is DNA gyrase inhibitor YacG from Shewanella baltica (strain OS223).